The primary structure comprises 681 residues: Macrolide export ATP-binding/permease protein MacB (681 aa).

In terms of domain architecture, ABC transporter spans 6–244 (LKLAAVTRRF…FAEVGVGAAA (239 aa)). 42 to 49 (GASGSGKS) serves as a coordination point for ATP. Over residues 246–273 (TETAADTRSAPASGDAPPPANNDTAADP) the composition is skewed to low complexity. The disordered stretch occupies residues 246 to 298 (TETAADTRSAPASGDAPPPANNDTAADPAPAPDASPPAPAVSPKHAGWRGSRS). Positions 274–285 (APAPDASPPAPA) are enriched in pro residues. The next 4 membrane-spanning stretches (helical) occupy residues 306-326 (CLTM…VAVG), 554-574 (LTLL…IGVM), 611-631 (LVCL…GALF), and 644-664 (AGAI…FGFM).

This sequence belongs to the ABC transporter superfamily. Macrolide exporter (TC 3.A.1.122) family. In terms of assembly, homodimer.

Its subcellular location is the cell inner membrane. Its function is as follows. Non-canonical ABC transporter that contains transmembrane domains (TMD), which form a pore in the inner membrane, and an ATP-binding domain (NBD), which is responsible for energy generation. Confers resistance against macrolides. The polypeptide is Macrolide export ATP-binding/permease protein MacB (Burkholderia orbicola (strain AU 1054)).